The primary structure comprises 546 residues: MKNQFQYCCIVILSVVMLFVSLLIPQASSAAVNGKGMNPDYKAYLMAPLKKIPEVTNWETFENDLRWAKQNGFYAITVDFWWGDMEKNGDQQFDFSYAQRFAQSVKNAGMKMIPIISTHQCGGNVGDDCNVPIPSWVWNQKSDDSLYFKSETGTVNKETLNPLASDVIRKEYGELYTAFAAAMKPYKDVIAKIYLSGGPAGELRYPSYTTSDGTGYPSRGKFQAYTEFAKSKFRLWVLNKYGSLNEVNKAWGTKLISELAILPPSDGEQFLMNGYLSMYGKDYLEWYQGILENHTKLIGELAHNAFDTTFQVPIGAKIAGVHWQYNNPTIPHGAEKPAGYNDYSHLLDAFKSAKLDVTFTCLEMTDKGSYPEYSMPKTLVQNIATLANEKGIVLNGENALSIGNEEEYKRVAEMAFNYNFAGFTLLRYQDVMYNNSLMGKFKDLLGVTPVMQTIVVKNVPTTIGDTVYITGNRAELGSWDTKQYPIQLYYDSHSNDWRGNVVLPAERNIEFKAFIKSKDGTVKSWQTIQQSWNPVPLKTTSHTSSW.

A signal peptide spans 1–30; the sequence is MKNQFQYCCIVILSVVMLFVSLLIPQASSA. Residue aspartate 79 participates in substrate binding. Positions 86, 90, and 91 each coordinate Ca(2+). Substrate contacts are provided by histidine 119 and aspartate 127. A disulfide bridge connects residues cysteine 121 and cysteine 129. Ca(2+)-binding residues include glutamate 171 and glutamate 174. The active-site Proton donor is the glutamate 202. Lysine 317, histidine 322, and threonine 360 together coordinate substrate. Glutamate 397 functions as the Proton acceptor in the catalytic mechanism. Substrate-binding positions include 398–399 and arginine 427; that span reads NA. The 103-residue stretch at 444-546 folds into the CBM20 domain; that stretch reads LLGVTPVMQT…LKTTSHTSSW (103 aa).

Belongs to the glycosyl hydrolase 14 family. In terms of assembly, monomer. Ca(2+) is required as a cofactor.

The catalysed reaction is Hydrolysis of (1-&gt;4)-alpha-D-glucosidic linkages in polysaccharides so as to remove successive maltose units from the non-reducing ends of the chains.. This Bacillus cereus protein is Beta-amylase (spoII).